Consider the following 161-residue polypeptide: Nucleotide-binding protein Bd0338 (161 aa).

This sequence belongs to the YajQ family.

Functionally, nucleotide-binding protein. The chain is Nucleotide-binding protein Bd0338 from Bdellovibrio bacteriovorus (strain ATCC 15356 / DSM 50701 / NCIMB 9529 / HD100).